Reading from the N-terminus, the 134-residue chain is uncharacterized protein (134 aa).

This is an uncharacterized protein from Bacillus subtilis (strain 168).